Consider the following 70-residue polypeptide: Small ribosomal subunit protein bS21 (70 aa).

The disordered stretch occupies residues 40–70 (KPTAERKRKHAAAVKRHYKRIRSQQLPPRLY). The span at 45–61 (RKRKHAAAVKRHYKRIR) shows a compositional bias: basic residues.

This sequence belongs to the bacterial ribosomal protein bS21 family.

The protein is Small ribosomal subunit protein bS21 of Bordetella parapertussis (strain 12822 / ATCC BAA-587 / NCTC 13253).